A 256-amino-acid chain; its full sequence is DNA repair protein RecO (256 aa).

The protein belongs to the RecO family.

Functionally, involved in DNA repair and RecF pathway recombination. This Streptococcus pneumoniae serotype 2 (strain D39 / NCTC 7466) protein is DNA repair protein RecO.